A 376-amino-acid chain; its full sequence is Adipocyte plasma membrane-associated protein (376 aa).

Residues 1–17 (MTFLMLAVSLAIPLLGA) traverse the membrane as a helical segment. N120 carries an N-linked (GlcNAc...) asparagine glycan.

It belongs to the strictosidine synthase family.

Its subcellular location is the membrane. Its function is as follows. Exhibits strong arylesterase activity with beta-naphthyl acetate and phenyl acetate. May play a role in adipocyte differentiation. This Rattus norvegicus (Rat) protein is Adipocyte plasma membrane-associated protein (Apmap).